Here is a 464-residue protein sequence, read N- to C-terminus: tRNA modification GTPase MnmE (464 aa).

Residues Arg27, Glu90, and Lys129 each coordinate (6S)-5-formyl-5,6,7,8-tetrahydrofolate. A TrmE-type G domain is found at 222-384; that stretch reads GITLVLAGSV…LYDKIRTLIS (163 aa). GTP contacts are provided by residues 232–237, 251–257, and 276–279; these read NAGKSS, SSYPGTT, and DTAG. Positions 236 and 257 each coordinate Mg(2+). A (6S)-5-formyl-5,6,7,8-tetrahydrofolate-binding site is contributed by Lys464.

This sequence belongs to the TRAFAC class TrmE-Era-EngA-EngB-Septin-like GTPase superfamily. TrmE GTPase family. Homodimer. Heterotetramer of two MnmE and two MnmG subunits. It depends on K(+) as a cofactor.

It is found in the cytoplasm. Its function is as follows. Exhibits a very high intrinsic GTPase hydrolysis rate. Involved in the addition of a carboxymethylaminomethyl (cmnm) group at the wobble position (U34) of certain tRNAs, forming tRNA-cmnm(5)s(2)U34. In Borreliella afzelii (strain PKo) (Borrelia afzelii), this protein is tRNA modification GTPase MnmE.